The primary structure comprises 286 residues: uncharacterized protein (286 aa).

This is an uncharacterized protein from Schizosaccharomyces pombe (strain 972 / ATCC 24843) (Fission yeast).